The sequence spans 75 residues: Penaeidin-3l (75 aa).

Residues Met1–Gly19 form the signal peptide. A Pyrrolidone carboxylic acid modification is found at Gln20. Cystine bridges form between Cys44–Cys59, Cys48–Cys66, and Cys60–Cys67. Ser74 carries the post-translational modification Serine amide.

The protein belongs to the penaeidin family.

The protein localises to the cytoplasmic granule. Functionally, antibacterial and antifungal activity. Presents chitin-binding activity. This chain is Penaeidin-3l, found in Penaeus setiferus (Atlantic white shrimp).